Reading from the N-terminus, the 131-residue chain is MSMSDPIADMLTRIRNAQMVEKKEVNVPASNLKSAIASVMQEEGYIKSFSVDGIAASKTLNIKLKYYDNKSVIEKLKRISKPSLRVYVSSSQMPSVMNGLGIVIVSTPKGVMTGQTAYEQNIGGEVLCSVY.

This sequence belongs to the universal ribosomal protein uS8 family. Part of the 30S ribosomal subunit. Contacts proteins S5 and S12.

Functionally, one of the primary rRNA binding proteins, it binds directly to 16S rRNA central domain where it helps coordinate assembly of the platform of the 30S subunit. The polypeptide is Small ribosomal subunit protein uS8 (Ruthia magnifica subsp. Calyptogena magnifica).